The primary structure comprises 266 residues: UPF0354 protein lwe1624 (266 aa).

The protein belongs to the UPF0354 family.

This Listeria welshimeri serovar 6b (strain ATCC 35897 / DSM 20650 / CCUG 15529 / CIP 8149 / NCTC 11857 / SLCC 5334 / V8) protein is UPF0354 protein lwe1624.